A 464-amino-acid polypeptide reads, in one-letter code: ATP synthase subunit beta (464 aa).

G151 to T158 contacts ATP.

The protein belongs to the ATPase alpha/beta chains family. In terms of assembly, F-type ATPases have 2 components, CF(1) - the catalytic core - and CF(0) - the membrane proton channel. CF(1) has five subunits: alpha(3), beta(3), gamma(1), delta(1), epsilon(1). CF(0) has three main subunits: a(1), b(2) and c(9-12). The alpha and beta chains form an alternating ring which encloses part of the gamma chain. CF(1) is attached to CF(0) by a central stalk formed by the gamma and epsilon chains, while a peripheral stalk is formed by the delta and b chains.

The protein resides in the cell membrane. The enzyme catalyses ATP + H2O + 4 H(+)(in) = ADP + phosphate + 5 H(+)(out). Produces ATP from ADP in the presence of a proton gradient across the membrane. The catalytic sites are hosted primarily by the beta subunits. The protein is ATP synthase subunit beta of Bacillus cytotoxicus (strain DSM 22905 / CIP 110041 / 391-98 / NVH 391-98).